The sequence spans 126 residues: Small ribosomal subunit protein bS16 (126 aa).

Residues Ala-87–Glu-126 are disordered. Basic and acidic residues predominate over residues Arg-99–Asp-113. A compositionally biased stretch (low complexity) spans Ala-114–Glu-126.

This sequence belongs to the bacterial ribosomal protein bS16 family.

This is Small ribosomal subunit protein bS16 from Agrobacterium fabrum (strain C58 / ATCC 33970) (Agrobacterium tumefaciens (strain C58)).